Here is a 93-residue protein sequence, read N- to C-terminus: Small ribosomal subunit protein uS19 (93 aa).

It belongs to the universal ribosomal protein uS19 family.

Protein S19 forms a complex with S13 that binds strongly to the 16S ribosomal RNA. The polypeptide is Small ribosomal subunit protein uS19 (Paenarthrobacter aurescens (strain TC1)).